We begin with the raw amino-acid sequence, 79 residues long: Exodeoxyribonuclease 7 small subunit (79 aa).

Belongs to the XseB family. Heterooligomer composed of large and small subunits.

The protein localises to the cytoplasm. The catalysed reaction is Exonucleolytic cleavage in either 5'- to 3'- or 3'- to 5'-direction to yield nucleoside 5'-phosphates.. Functionally, bidirectionally degrades single-stranded DNA into large acid-insoluble oligonucleotides, which are then degraded further into small acid-soluble oligonucleotides. The sequence is that of Exodeoxyribonuclease 7 small subunit from Geobacillus kaustophilus (strain HTA426).